Reading from the N-terminus, the 156-residue chain is Small ribosomal subunit protein uS7 (156 aa).

It belongs to the universal ribosomal protein uS7 family. In terms of assembly, part of the 30S ribosomal subunit. Contacts proteins S9 and S11.

In terms of biological role, one of the primary rRNA binding proteins, it binds directly to 16S rRNA where it nucleates assembly of the head domain of the 30S subunit. Is located at the subunit interface close to the decoding center, probably blocks exit of the E-site tRNA. This Pelobacter propionicus (strain DSM 2379 / NBRC 103807 / OttBd1) protein is Small ribosomal subunit protein uS7.